We begin with the raw amino-acid sequence, 674 residues long: Anosmin-1 (674 aa).

The first 21 residues, 1 to 21 (MVRRAPGASLALLLWVTAVSC), serve as a signal peptide directing secretion. Intrachain disulfides connect Cys-47–Cys-71, Cys-80–Cys-99, Cys-84–Cys-95, and Cys-110–Cys-114. N-linked (GlcNAc...) asparagine glycosylation occurs at Asn-65. The WAP domain maps to 121–170 (LSVKQGDCPAPEKASGFAAACFESCEADSECSGVKKCCSNGCGHTCQVPK). Fibronectin type-III domains follow at residues 180-281 (PRKE…SKDP), 286-392 (APSN…TTQD), 418-515 (RRKP…FFVT), and 545-652 (KPEN…DLPP). Residues Asn-203 and Asn-294 are each glycosylated (N-linked (GlcNAc...) asparagine). Polar residues predominate over residues 388-402 (STTQDNRNNNEQTSV). Positions 388–413 (STTQDNRNNNEQTSVEKPPKGVVDPY) are disordered. N-linked (GlcNAc...) asparagine glycans are attached at residues Asn-465, Asn-548, and Asn-559. Residues 655–674 (PHRPHLKHHPHRYKPPPEKY) form a disordered region. Residues 656–668 (HRPHLKHHPHRYK) are compositionally biased toward basic residues.

Its subcellular location is the cell surface. Its function is as follows. May be an adhesion-like molecule with anti-protease activity. In Coturnix japonica (Japanese quail), this protein is Anosmin-1.